The primary structure comprises 81 residues: Acyl carrier protein (81 aa).

One can recognise a Carrier domain in the interval 4 to 79 (SEILEKVKAI…DVLDFINNKV (76 aa)). Ser39 is subject to O-(pantetheine 4'-phosphoryl)serine.

Belongs to the acyl carrier protein (ACP) family. Post-translationally, 4'-phosphopantetheine is transferred from CoA to a specific serine of apo-ACP by AcpS. This modification is essential for activity because fatty acids are bound in thioester linkage to the sulfhydryl of the prosthetic group.

Its subcellular location is the cytoplasm. It participates in lipid metabolism; fatty acid biosynthesis. Its function is as follows. Carrier of the growing fatty acid chain in fatty acid biosynthesis. The polypeptide is Acyl carrier protein (Thermosynechococcus vestitus (strain NIES-2133 / IAM M-273 / BP-1)).